The sequence spans 161 residues: ATP synthase subunit b 1 (161 aa).

A helical transmembrane segment spans residues 5–25 (AETWVAVAFVLMVALFIYFGA).

This sequence belongs to the ATPase B chain family. F-type ATPases have 2 components, F(1) - the catalytic core - and F(0) - the membrane proton channel. F(1) has five subunits: alpha(3), beta(3), gamma(1), delta(1), epsilon(1). F(0) has three main subunits: a(1), b(2) and c(10-14). The alpha and beta chains form an alternating ring which encloses part of the gamma chain. F(1) is attached to F(0) by a central stalk formed by the gamma and epsilon chains, while a peripheral stalk is formed by the delta and b chains.

The protein resides in the cell inner membrane. In terms of biological role, f(1)F(0) ATP synthase produces ATP from ADP in the presence of a proton or sodium gradient. F-type ATPases consist of two structural domains, F(1) containing the extramembraneous catalytic core and F(0) containing the membrane proton channel, linked together by a central stalk and a peripheral stalk. During catalysis, ATP synthesis in the catalytic domain of F(1) is coupled via a rotary mechanism of the central stalk subunits to proton translocation. Component of the F(0) channel, it forms part of the peripheral stalk, linking F(1) to F(0). The protein is ATP synthase subunit b 1 of Afipia carboxidovorans (strain ATCC 49405 / DSM 1227 / KCTC 32145 / OM5) (Oligotropha carboxidovorans).